Consider the following 60-residue polypeptide: Mannitol-specific phosphotransferase enzyme IIA component (60 aa).

Residues 2-60 (SELFSNDNIFLNVNVNSQNEAIEKAGKALVDSGAVTDAYIQVVSTFMGNGLAIPHGTDD) enclose the PTS EIIA type-2 domain. Histidine 56 (tele-phosphohistidine intermediate) is an active-site residue. Residue histidine 56 is modified to Phosphohistidine; by HPr.

Homodimer or homotrimer. Seems to be a monomer when not phosphorylated.

The protein resides in the cytoplasm. The phosphoenolpyruvate-dependent sugar phosphotransferase system (sugar PTS), a major carbohydrate active transport system, catalyzes the phosphorylation of incoming sugar substrates concomitantly with their translocation across the cell membrane. The enzyme II CmtAB PTS system is involved in D-mannitol transport. This chain is Mannitol-specific phosphotransferase enzyme IIA component, found in Staphylococcus aureus.